We begin with the raw amino-acid sequence, 404 residues long: Argininosuccinate synthase (404 aa).

ATP contacts are provided by residues A12 to S20 and A39. 2 residues coordinate L-citrulline: Y90 and S95. G120 provides a ligand contact to ATP. L-aspartate is bound by residues T122, N126, and D127. N126 lines the L-citrulline pocket. L-citrulline is bound by residues R130, S181, S190, E266, and Y278.

It belongs to the argininosuccinate synthase family. Type 1 subfamily. As to quaternary structure, homotetramer.

It is found in the cytoplasm. It catalyses the reaction L-citrulline + L-aspartate + ATP = 2-(N(omega)-L-arginino)succinate + AMP + diphosphate + H(+). It participates in amino-acid biosynthesis; L-arginine biosynthesis; L-arginine from L-ornithine and carbamoyl phosphate: step 2/3. The chain is Argininosuccinate synthase from Rhodospirillum rubrum (strain ATCC 11170 / ATH 1.1.1 / DSM 467 / LMG 4362 / NCIMB 8255 / S1).